Reading from the N-terminus, the 266-residue chain is Large ribosomal subunit protein uL4 (266 aa).

It belongs to the universal ribosomal protein uL4 family. Part of the 50S ribosomal subunit.

Functionally, one of the primary rRNA binding proteins, this protein initially binds near the 5'-end of the 23S rRNA. It is important during the early stages of 50S assembly. It makes multiple contacts with different domains of the 23S rRNA in the assembled 50S subunit and ribosome. Its function is as follows. Forms part of the polypeptide exit tunnel. This Sulfurisphaera tokodaii (strain DSM 16993 / JCM 10545 / NBRC 100140 / 7) (Sulfolobus tokodaii) protein is Large ribosomal subunit protein uL4.